The primary structure comprises 309 residues: Methionyl-tRNA formyltransferase (309 aa).

112–115 (SLLP) is a (6S)-5,6,7,8-tetrahydrofolate binding site.

Belongs to the Fmt family.

It carries out the reaction L-methionyl-tRNA(fMet) + (6R)-10-formyltetrahydrofolate = N-formyl-L-methionyl-tRNA(fMet) + (6S)-5,6,7,8-tetrahydrofolate + H(+). Attaches a formyl group to the free amino group of methionyl-tRNA(fMet). The formyl group appears to play a dual role in the initiator identity of N-formylmethionyl-tRNA by promoting its recognition by IF2 and preventing the misappropriation of this tRNA by the elongation apparatus. The polypeptide is Methionyl-tRNA formyltransferase (Bartonella tribocorum (strain CIP 105476 / IBS 506)).